We begin with the raw amino-acid sequence, 239 residues long: Ribose-5-phosphate isomerase A (239 aa).

Substrate-binding positions include 31–34, 88–91, and 101–104; these read FGST, DGAD, and KGGG. Catalysis depends on E110, which acts as the Proton acceptor. K128 serves as a coordination point for substrate.

The protein belongs to the ribose 5-phosphate isomerase family. As to quaternary structure, homodimer.

The catalysed reaction is aldehydo-D-ribose 5-phosphate = D-ribulose 5-phosphate. Its pathway is carbohydrate degradation; pentose phosphate pathway; D-ribose 5-phosphate from D-ribulose 5-phosphate (non-oxidative stage): step 1/1. Catalyzes the reversible conversion of ribose-5-phosphate to ribulose 5-phosphate. In Chloroflexus aurantiacus (strain ATCC 29366 / DSM 635 / J-10-fl), this protein is Ribose-5-phosphate isomerase A.